Consider the following 731-residue polypeptide: Alpha-catulin (731 aa).

Ser373 and Ser537 each carry phosphoserine. The interval 535-559 (HLSLPKPTKNSANLKSLKPDKPDSE) is disordered.

It belongs to the vinculin/alpha-catenin family. In terms of assembly, interacts with ARHGEF1. Interacts with Dtna. The interaction is required for correct localization of both Ctnnal1 and Dtna.

The protein resides in the cytoplasm. It localises to the cytoskeleton. The protein localises to the cell membrane. Its function is as follows. May modulate the Rho pathway signaling by providing a scaffold for the Lbc Rho guanine nucleotide exchange factor (ARHGEF1). The polypeptide is Alpha-catulin (Ctnnal1) (Mus musculus (Mouse)).